The primary structure comprises 1171 residues: Putative tricorn protease homolog 2 (1171 aa).

Positions 432-498 (AGYPPDAGDE…GSPGTPATAG (67 aa)) are disordered. Composition is skewed to low complexity over residues 444-456 (AGTAARADSAPDA) and 466-498 (IAAGTGTGDIADADAAAGGTVTPGSPGTPATAG). Catalysis depends on H827, which acts as the Charge relay system. The segment at 842–941 (YQRWQGLLGA…RVAVVPLVDE (100 aa)) is PDZ-like. 1002-1004 (AGG) contributes to the substrate binding site. S1051 (nucleophile) is an active-site residue. 1079 to 1081 (GMT) is a binding site for substrate. The active-site Charge relay system is E1109. A disordered region spans residues 1149-1171 (PPATPPGYEAVPDRSRPPLPPRE). Positions 1159–1171 (VPDRSRPPLPPRE) are enriched in basic and acidic residues.

The protein belongs to the peptidase S41B family.

Its subcellular location is the cytoplasm. Functionally, degrades oligopeptides in a sequential manner. The polypeptide is Putative tricorn protease homolog 2 (tri2) (Streptomyces coelicolor (strain ATCC BAA-471 / A3(2) / M145)).